Reading from the N-terminus, the 725-residue chain is MAATATKTIDFAAERALAKDFLANFAGPRGEPKYLNILQDVANRKIRAVQIELDDLFHYKDADDEFLQRVTENTKRYIGIFADAIDELMPESTEAYAVDEDRDILMTQRVDEGADGGADGTDPLQRMPPEIRRFFEVYIKAFSKVTPLTIRQVKASNIGQLVKISGIVTRCSDVKPLMQVAVYTCEECGFEIYQEVTARVFMPLFECPSQRCKLNKAKGNLILQLRASKFLKFQEVKLQELAEHVPKGHIPRSLTVHLRGELTRKVAPGDVVEMSGIFLPMPYYGFRAMRAGLVADTYLESMSITHFKKKYEEYELKGDEQEQIDRLAEDGDIYNKLARSLAPEIFGHEDVKKALLLLLVGAPHRKLTDGMKIRGDLHICLMGDPGVAKSQLLKHIINVAPRGVYTTGRGSSGVGLTAAVQKDPVTNEFVLEGGALVLADMGICAIDEFDKMEESDRTAIHEVMEQQTVSIAKAGITTSLNARTAVLAAANPAWGRYDMRRTPAENINLPPALLSRFDLLWLILDRADMETDLEMARHVVHVHQNLESPALGFTPLEPPVLRAYISAARRVVPSVPRELEEYIATAYSSIRQEEAKSNAPHSYTTIRTLLSILRISIALARLRFSETVAQSDVDEALRLMQMSKYSLYSDDRQRSGLDAISDIYSILRDEAARTNSMDVRYAHALNLISRKGYSEAQLKECLEEYASLNVWQIHPNTFDIHFIDA.

Positions 333–538 constitute an MCM domain; sequence IYNKLARSLA…METDLEMARH (206 aa). Residue 383-390 coordinates ATP; it reads GDPGVAKS. The Arginine finger signature appears at 515-518; the sequence is SRFD.

Belongs to the MCM family. In terms of assembly, component of the minichromosome maintenance (MCM) complex, a heterotetramer composed of MCM2, MCM3, MCM4, MCM5, MCM6 and MCM7.

It is found in the nucleus. It carries out the reaction ATP + H2O = ADP + phosphate + H(+). Functionally, probable component of the MCM2-7 complex (MCM complex) that may function as a DNA helicase and which is essential to undergo a single round of replication initiation and elongation per cell cycle in eukaryotic cells. This Oryza sativa subsp. indica (Rice) protein is DNA replication licensing factor MCM7 (MCM7).